A 261-amino-acid chain; its full sequence is L-erythrulose-1-phosphate isomerase (261 aa).

H99 (electrophile) is an active-site residue. The active-site Proton acceptor is E172.

The protein belongs to the triosephosphate isomerase family.

The enzyme catalyses L-erythrulose 1-phosphate = D-erythrulose 4-phosphate. It functions in the pathway carbohydrate metabolism. In terms of biological role, involved in catabolism of D-apiose. Catalyzes the isomerization of L-erythrulose 1-phosphate to D-erythrulose 4-phosphate. This chain is L-erythrulose-1-phosphate isomerase, found in Rhizobium rhizogenes (strain K84 / ATCC BAA-868) (Agrobacterium radiobacter).